The following is a 363-amino-acid chain: Type-2 angiotensin II receptor (363 aa).

Residues 1–45 (MKGNSTLATTSKNITSGLHFGLVNISGNNESTLNCSQKPSDKHLD) are Extracellular-facing. N-linked (GlcNAc...) asparagine glycosylation is found at Asn4, Asn13, Asn24, Asn29, and Asn34. 2 disulfide bridges follow: Cys35/Cys290 and Cys117/Cys195. Residues 46–70 (AIPILYYIIFVIGFLVNIVVVTLFC) traverse the membrane as a helical segment. At 71 to 80 (CQKGPKKVSS) the chain is on the cytoplasmic side. The helical transmembrane segment at 81–104 (IYIFNLAVADLLLLATLPLWATYY) threads the bilayer. Tyr103 and Tyr104 together coordinate angiotensin II. Residues 105-114 (SYRYDWLFGP) lie on the Extracellular side of the membrane. Residues 115-140 (VMCKVFGSFLTLNMFASIFFITCMSV) form a helical membrane-spanning segment. At 141–159 (DRYQSVIYPFLSQRRNPWQ) the chain is on the cytoplasmic side. The helical transmembrane segment at 160–181 (ASYIVPLVWCMACLSSLPTFYF) threads the bilayer. Residues Arg182, Tyr204, and Lys215 each contribute to the angiotensin II site. At 182–206 (RDVRTIEYLGVNACIMAFPPEKYAQ) the chain is on the extracellular side. Residues 207 to 232 (WSAGIALMKNILGFIIPLIFIATCYF) form a helical membrane-spanning segment. Over 233–257 (GIRKHLLKTNSYGKNRITRDQVLKM) the chain is Cytoplasmic. Residues 258-281 (AAAVVLAFIICWLPFHVLTFLDAL) form a helical membrane-spanning segment. Residue Asp279 participates in angiotensin II binding. The Extracellular segment spans residues 282 to 294 (AWMGVINSCEVIA). Residues 295–320 (VIDLALPFAILLGFTNSCVNPFLYCF) traverse the membrane as a helical segment. Asp297 lines the angiotensin II pocket. Residues 321–363 (VGNRFQQKLRSVFRVPITWLQGKRESMSCRKSSSLREMETFVS) are Cytoplasmic-facing. The tract at residues 324 to 333 (RFQQKLRSVF) is helix VIII.

It belongs to the G-protein coupled receptor 1 family. As to quaternary structure, interacts with MTUS1. As to expression, in adult, highly expressed in myometrium with lower levels in adrenal gland and fallopian tube. Expressed in the cerebellum. Very highly expressed in fetal kidney and intestine.

It localises to the cell membrane. Its function is as follows. Receptor for angiotensin II, a vasoconstricting peptide. Signals primarily via a non-canonical G-protein- and beta-arrestin independent pathways. Cooperates with MTUS1 to inhibit ERK2 activation and cell proliferation. This Homo sapiens (Human) protein is Type-2 angiotensin II receptor.